Consider the following 241-residue polypeptide: Homeobox protein TGIF2LX (241 aa).

Disordered stretches follow at residues 1 to 58 (MEAA…GNLP) and 125 to 207 (KTGK…ELVS). Residues 10 to 39 (ETQSPVQKDSPAKTQSPAQDTSIMSRNNAD) are compositionally biased toward polar residues. The segment at residues 48–111 (EHKKKRKGNL…INARRRILPD (64 aa)) is a DNA-binding region (homeobox; TALE-type).

This sequence belongs to the TALE/TGIF homeobox family.

It localises to the nucleus. May have a transcription role in testis. The polypeptide is Homeobox protein TGIF2LX (TGIF2LX) (Pan troglodytes (Chimpanzee)).